The following is a 346-amino-acid chain: S-adenosylmethionine:tRNA ribosyltransferase-isomerase (346 aa).

It belongs to the QueA family. Monomer.

The protein localises to the cytoplasm. The catalysed reaction is 7-aminomethyl-7-carbaguanosine(34) in tRNA + S-adenosyl-L-methionine = epoxyqueuosine(34) in tRNA + adenine + L-methionine + 2 H(+). The protein operates within tRNA modification; tRNA-queuosine biosynthesis. In terms of biological role, transfers and isomerizes the ribose moiety from AdoMet to the 7-aminomethyl group of 7-deazaguanine (preQ1-tRNA) to give epoxyqueuosine (oQ-tRNA). The chain is S-adenosylmethionine:tRNA ribosyltransferase-isomerase from Chloroherpeton thalassium (strain ATCC 35110 / GB-78).